Here is a 271-residue protein sequence, read N- to C-terminus: Ribosomal RNA small subunit methyltransferase A (271 aa).

S-adenosyl-L-methionine is bound by residues Asn-19, Leu-21, Gly-46, Glu-67, Asp-92, and Asn-114.

Belongs to the class I-like SAM-binding methyltransferase superfamily. rRNA adenine N(6)-methyltransferase family. RsmA subfamily.

The protein localises to the cytoplasm. It catalyses the reaction adenosine(1518)/adenosine(1519) in 16S rRNA + 4 S-adenosyl-L-methionine = N(6)-dimethyladenosine(1518)/N(6)-dimethyladenosine(1519) in 16S rRNA + 4 S-adenosyl-L-homocysteine + 4 H(+). In terms of biological role, specifically dimethylates two adjacent adenosines (A1518 and A1519) in the loop of a conserved hairpin near the 3'-end of 16S rRNA in the 30S particle. May play a critical role in biogenesis of 30S subunits. The chain is Ribosomal RNA small subunit methyltransferase A from Aeromonas hydrophila subsp. hydrophila (strain ATCC 7966 / DSM 30187 / BCRC 13018 / CCUG 14551 / JCM 1027 / KCTC 2358 / NCIMB 9240 / NCTC 8049).